Consider the following 442-residue polypeptide: Histidine--tRNA ligase (442 aa).

The segment at 416-442 is disordered; the sequence is SGDETTVPVEEFPPEGGEELPTYEDYE. Residues 427–442 are compositionally biased toward acidic residues; sequence FPPEGGEELPTYEDYE.

It belongs to the class-II aminoacyl-tRNA synthetase family.

Its subcellular location is the cytoplasm. It catalyses the reaction tRNA(His) + L-histidine + ATP = L-histidyl-tRNA(His) + AMP + diphosphate + H(+). This chain is Histidine--tRNA ligase, found in Halorubrum lacusprofundi (strain ATCC 49239 / DSM 5036 / JCM 8891 / ACAM 34).